The sequence spans 433 residues: Alpha-(1,3)-fucosyltransferase 4 (433 aa).

The Cytoplasmic portion of the chain corresponds to 1–52 (MAPARQELQHESRCRPSRTVDAWRAAVATRGRHMETPGYRRRTRCGGWGLPR). A helical; Signal-anchor for type II membrane protein membrane pass occupies residues 53–74 (SVSSLAAVGLLCTALTTFICWG). The Lumenal segment spans residues 75–433 (QLPPLPWASP…IHNLADWFQR (359 aa)). Residues Asn-117 and Asn-218 are each glycosylated (N-linked (GlcNAc...) asparagine).

The protein belongs to the glycosyltransferase 10 family. Highest expression in stomach and colon. It is also expressed in the lung, testis, uterus, small intestine and to a lesser extent in spleen, and ovary. Present in trace amounts in brain, thymus, heart, smooth muscle, kidney and bone marrow. Not found in liver, salivary gland and pancreas.

The protein resides in the golgi apparatus. It localises to the golgi stack membrane. The enzyme catalyses a beta-D-galactosyl-(1-&gt;4)-N-acetyl-beta-D-glucosaminyl derivative + GDP-beta-L-fucose = a beta-D-galactosyl-(1-&gt;4)-[alpha-L-fucosyl-(1-&gt;3)]-N-acetyl-beta-D-glucosaminyl derivative + GDP + H(+). It catalyses the reaction an N-acetyl-alpha-neuraminyl-(2-&gt;3)-beta-D-galactosyl-(1-&gt;4)-N-acetyl-beta-D-glucosaminyl derivative + GDP-beta-L-fucose = an alpha-Neu5Ac-(2-&gt;3)-beta-D-Gal-(1-&gt;4)-[alpha-L-Fuc-(1-&gt;3)]-beta-D-GlcNAc derivative + GDP + H(+). The catalysed reaction is an alpha-Neu5Ac-(2-&gt;3)-beta-D-Gal-(1-&gt;4)-beta-D-GlcNAc-(1-&gt;3)-beta-D-Gal-(1-&gt;4)-beta-D-GlcNAc derivative + GDP-beta-L-fucose = an alpha-Neu5Ac-(2-&gt;3)-beta-D-Gal-(1-&gt;4)-beta-D-GlcNAc-(1-&gt;3)-beta-D-Gal-(1-&gt;4)-[alpha-L-Fuc-(1-&gt;3)]-beta-D-GlcNAc derivative + GDP + H(+). It carries out the reaction an alpha-Neu5Ac-(2-&gt;3)-beta-D-Gal-(1-&gt;4)-beta-D-GlcNAc6S derivative + GDP-beta-L-fucose = an alpha-Neu5Ac-(2-&gt;3)-beta-D-Gal-(1-&gt;4)-[alpha-L-Fuc-(1-&gt;3)]-beta-D-GlcNAc6S derivative + GDP + H(+). It participates in protein modification; protein glycosylation. Catalyzes alpha(1-&gt;3) linkage of fucosyl moiety transferred from GDP-beta-L-fucose to N-acetyl glucosamine (GlcNAc) within type 2 lactosamine (LacNAc, Gal-beta(1-&gt;4)GlcNAc) glycan attached to N- or O-linked glycoproteins. Robustly fucosylates nonsialylated distal LacNAc unit of the polylactosamine chain to form Lewis X antigen (CD15), a glycan determinant known to mediate important cellular functions in development and immunity. Fucosylates with lower efficiency sialylated LacNAc acceptors to form sialyl Lewis X and 6-sulfo sialyl Lewis X determinants that serve as recognition epitopes for C-type lectins. Together with FUT7 contributes to SELE, SELL and SELP selectin ligand biosynthesis and selectin-dependent lymphocyte homing, leukocyte migration and blood leukocyte homeostasis. In a cell type specific manner, may also fucosylate the internal LacNAc unit of the polylactosamine chain to form VIM-2 antigen that serves as recognition epitope for SELE. This Mus musculus (Mouse) protein is Alpha-(1,3)-fucosyltransferase 4 (Fut4).